Reading from the N-terminus, the 209-residue chain is Imidazole glycerol phosphate synthase subunit HisH (209 aa).

The Glutamine amidotransferase type-1 domain maps to 1–205 (MIAIIDYGMG…KGVVETWKSS (205 aa)). Catalysis depends on cysteine 79, which acts as the Nucleophile. Active-site residues include histidine 180 and glutamate 182.

In terms of assembly, heterodimer of HisH and HisF.

It localises to the cytoplasm. The catalysed reaction is 5-[(5-phospho-1-deoxy-D-ribulos-1-ylimino)methylamino]-1-(5-phospho-beta-D-ribosyl)imidazole-4-carboxamide + L-glutamine = D-erythro-1-(imidazol-4-yl)glycerol 3-phosphate + 5-amino-1-(5-phospho-beta-D-ribosyl)imidazole-4-carboxamide + L-glutamate + H(+). The enzyme catalyses L-glutamine + H2O = L-glutamate + NH4(+). Its pathway is amino-acid biosynthesis; L-histidine biosynthesis; L-histidine from 5-phospho-alpha-D-ribose 1-diphosphate: step 5/9. In terms of biological role, IGPS catalyzes the conversion of PRFAR and glutamine to IGP, AICAR and glutamate. The HisH subunit catalyzes the hydrolysis of glutamine to glutamate and ammonia as part of the synthesis of IGP and AICAR. The resulting ammonia molecule is channeled to the active site of HisF. This chain is Imidazole glycerol phosphate synthase subunit HisH, found in Bacillus thuringiensis subsp. konkukian (strain 97-27).